The sequence spans 243 residues: R-spondin-2 (243 aa).

The first 21 residues, 1–21 (MQFRLFSFALIILNCMDYSHC), serve as a signal peptide directing secretion. Intrachain disulfides connect cysteine 40–cysteine 46, cysteine 43–cysteine 52, cysteine 55–cysteine 74, cysteine 78–cysteine 93, cysteine 96–cysteine 104, cysteine 101–cysteine 110, cysteine 113–cysteine 124, cysteine 128–cysteine 141, cysteine 145–cysteine 187, cysteine 156–cysteine 163, and cysteine 196–cysteine 203. The FU repeat unit spans residues 90 to 134 (MNRCARCRIENCDSCFSKDFCTKCKVGFYLHRGRCFDECPDGFAP). The 61-residue stretch at 144–204 (GCEVGHWSEW…RCKMTMRHCP (61 aa)) folds into the TSP type-1 domain. Asparagine 160 carries an N-linked (GlcNAc...) asparagine glycan. Residues 204–224 (PGGKRTPKAKEKRNKKKKRKL) are compositionally biased toward basic residues. The interval 204–243 (PGGKRTPKAKEKRNKKKKRKLIERAQEQHSVFLATDRANQ) is disordered.

It belongs to the R-spondin family. In terms of assembly, interacts with WNT1. Binds heparin. Interacts with LGR4, LGR5 and LGR6. Interacts with E3 ubiquitin ligases RNF43 and ZNRF3.

Its subcellular location is the secreted. Its function is as follows. Activator of the canonical Wnt signaling pathway by acting as a ligand for LGR4-6 receptors. Upon binding to LGR4-6 (LGR4, LGR5 or LGR6), LGR4-6 associate with phosphorylated LRP6 and frizzled receptors that are activated by extracellular Wnt receptors, triggering the canonical Wnt signaling pathway to increase expression of target genes. Also regulates the canonical Wnt/beta-catenin-dependent pathway and non-canonical Wnt signaling by acting as an inhibitor of ZNRF3, an important regulator of the Wnt signaling pathway. During embryonic development, plays a crucial role in limb specification, amplifying the Wnt signaling pathway independently of LGR4-6 receptors, possibly by acting as a direct antagonistic ligand to RNF43 and ZNRF3, hence governing the number of limbs an embryo should form. The protein is R-spondin-2 (RSPO2) of Homo sapiens (Human).